The following is a 354-amino-acid chain: Guanine nucleotide-binding protein G(o) subunit alpha (354 aa).

Glycine 2 carries N-myristoyl glycine lipidation. Cysteine 3 carries S-palmitoyl cysteine lipidation. A G-alpha domain is found at 32–354 (KDVKLLLLGA…ANNLRGCGLY (323 aa)). The G1 motif stretch occupies residues 35-48 (KLLLLGAGESGKST). Positions 43, 46, 47, 48, 152, 176, 177, 178, and 179 each coordinate GTP. Serine 47 lines the Mg(2+) pocket. Residues 174–182 (DILRTRVKT) are G2 motif. A Mg(2+)-binding site is contributed by threonine 182. Positions 197 to 206 (FRLFDVGGQR) are G3 motif. The residue at position 205 (glutamine 205) is a 5-glutamyl histamine. Positions 266 to 273 (ILFLNKKD) are G4 motif. Residues asparagine 270, aspartate 273, and cysteine 325 each contribute to the GTP site. The tract at residues 324–329 (TCATDT) is G5 motif. Cysteine 351 carries S-palmitoyl cysteine lipidation.

The protein belongs to the G-alpha family. G(i/o/t/z) subfamily. As to quaternary structure, g proteins are composed of 3 units; alpha, beta and gamma. The alpha chain contains the guanine nucleotide binding site. Forms a complex with GNB1 and GNG3. Interacts with RGS14. Interacts with RGS16. Interacts with RGS19. Interacts (when palmitoylated) with ADGRG3. Post-translationally, histaminylated at Gln-205 residues by TGM2.

The protein resides in the cell membrane. It is found in the membrane. It catalyses the reaction GTP + H2O = GDP + phosphate + H(+). Its activity is regulated as follows. The GTPase activity is promoted by GTPAse activators, such as RGS14, RGS16 and RGS19. In terms of biological role, guanine nucleotide-binding proteins (G proteins) function as transducers downstream of G protein-coupled receptors (GPCRs) in numerous signaling cascades. The alpha chain contains the guanine nucleotide binding site and alternates between an active, GTP-bound state and an inactive, GDP-bound state. Signaling by an activated GPCR promotes GDP release and GTP binding. The alpha subunit has a low GTPase activity that converts bound GTP to GDP, thereby terminating the signal. Both GDP release and GTP hydrolysis are modulated by numerous regulatory proteins. Signaling is mediated via effector proteins, such as adenylate cyclase. Inhibits adenylate cyclase activity, leading to decreased intracellular cAMP levels. This Mus musculus (Mouse) protein is Guanine nucleotide-binding protein G(o) subunit alpha (Gnao1).